The following is a 259-amino-acid chain: HTH-type transcriptional regulator TtgV (259 aa).

In terms of domain architecture, HTH iclR-type spans 14-76; the sequence is IQVIARAASI…GPAGGFRLGP (63 aa). Positions 36–59 form a DNA-binding region, H-T-H motif; the sequence is LAAIAQLVGLPRSTVQRIINALEE. Positions 89–253 constitute an IclR-ED domain; sequence ILSLVKPYLR…KLNIERAIGR (165 aa).

Its function is as follows. Represses the expression of the ttgGHI and ttgVW operons. Binds to the ttgGHI / ttgVW intergenic region, probably preventing binding of RNA polymerase; ttgV dissociates from this region in the presence of 1-hexanol. This Pseudomonas putida (strain DOT-T1E) protein is HTH-type transcriptional regulator TtgV (ttgV).